The chain runs to 346 residues: Uroporphyrinogen decarboxylase (346 aa).

Substrate contacts are provided by residues Arg26–Arg30, Phe45, Asp76, Tyr153, Ser208, and His323.

Belongs to the uroporphyrinogen decarboxylase family. In terms of assembly, homodimer.

The protein resides in the cytoplasm. It catalyses the reaction uroporphyrinogen III + 4 H(+) = coproporphyrinogen III + 4 CO2. It functions in the pathway porphyrin-containing compound metabolism; protoporphyrin-IX biosynthesis; coproporphyrinogen-III from 5-aminolevulinate: step 4/4. Its function is as follows. Catalyzes the decarboxylation of four acetate groups of uroporphyrinogen-III to yield coproporphyrinogen-III. This chain is Uroporphyrinogen decarboxylase, found in Prochlorococcus marinus subsp. pastoris (strain CCMP1986 / NIES-2087 / MED4).